The sequence spans 265 residues: Cell adhesion molecule CEACAM7 (265 aa).

A signal peptide spans 1–35 (MGSPSACPYRVCIPWQGLLLTASLLTFWNLPNSAQ). The Ig-like V-type domain maps to 36-142 (TNIDVVPFNV…EEVTRQFYVF (107 aa)). Residues N57, N85, N105, N112, N174, N183, and N198 are each glycosylated (N-linked (GlcNAc...) asparagine). One can recognise an Ig-like C2-type domain in the interval 146–233 (PKPSITSNNF…ASRSDPVTLN (88 aa)). A disulfide bond links C168 and C216. Residue S242 is the site of GPI-anchor amidated serine attachment. A propeptide spans 243 to 265 (SPDLSAGTAVSIMIGVLAGMALI) (removed in mature form).

It belongs to the immunoglobulin superfamily. CEA family. In terms of assembly, homodimer. In terms of tissue distribution, expressed in columnar epithelial cells of the colon (at protein level). Strongly down-regulated in colonic adenocarcinomas.

It localises to the cell membrane. It is found in the apical cell membrane. This chain is Cell adhesion molecule CEACAM7, found in Homo sapiens (Human).